We begin with the raw amino-acid sequence, 365 residues long: 4-hydroxy-3-methylbut-2-en-1-yl diphosphate synthase (flavodoxin) (365 aa).

The [4Fe-4S] cluster site is built by C270, C273, C305, and E312.

This sequence belongs to the IspG family. The cofactor is [4Fe-4S] cluster.

The enzyme catalyses (2E)-4-hydroxy-3-methylbut-2-enyl diphosphate + 2 oxidized [2Fe-2S]-[ferredoxin] + H2O = 2-C-methyl-D-erythritol 2,4-cyclic diphosphate + 2 reduced [2Fe-2S]-[ferredoxin] + H(+). The catalysed reaction is (2E)-4-hydroxy-3-methylbut-2-enyl diphosphate + oxidized [flavodoxin] + H2O + 2 H(+) = 2-C-methyl-D-erythritol 2,4-cyclic diphosphate + reduced [flavodoxin]. It functions in the pathway isoprenoid biosynthesis; isopentenyl diphosphate biosynthesis via DXP pathway; isopentenyl diphosphate from 1-deoxy-D-xylulose 5-phosphate: step 5/6. In terms of biological role, converts 2C-methyl-D-erythritol 2,4-cyclodiphosphate (ME-2,4cPP) into 1-hydroxy-2-methyl-2-(E)-butenyl 4-diphosphate. Involved in density-dependent regulation of 2'-N-acetyltransferase. The protein is 4-hydroxy-3-methylbut-2-en-1-yl diphosphate synthase (flavodoxin) of Providencia stuartii.